The sequence spans 451 residues: 2-succinylbenzoate--CoA ligase (451 aa).

Belongs to the ATP-dependent AMP-binding enzyme family. MenE subfamily.

The catalysed reaction is 2-succinylbenzoate + ATP + CoA = 2-succinylbenzoyl-CoA + AMP + diphosphate. The protein operates within quinol/quinone metabolism; 1,4-dihydroxy-2-naphthoate biosynthesis; 1,4-dihydroxy-2-naphthoate from chorismate: step 5/7. It functions in the pathway quinol/quinone metabolism; menaquinone biosynthesis. In terms of biological role, converts 2-succinylbenzoate (OSB) to 2-succinylbenzoyl-CoA (OSB-CoA). This Escherichia coli (strain K12) protein is 2-succinylbenzoate--CoA ligase.